Consider the following 306-residue polypeptide: Apolipoprotein E (306 aa).

Residues 1–18 (MKVLWAVLVVTLLAGCQA) form the signal peptide. 8 repeat units span residues 81 to 102 (VLME…QELG), 103 to 124 (PMAE…ARLG), 125 to 146 (ADME…TMLG), 147 to 168 (QSAE…KRLL), 169 to 190 (RDAE…EGAE), 191 to 212 (RGVS…LRAA), 213 to 230 (QTSQ…ERLR), and 231 to 252 (GRLE…EQME). The tract at residues 81–252 (VLMEDTMKEV…RLDVVREQME (172 aa)) is 8 X 22 AA approximate tandem repeats. Met144 is subject to Methionine sulfoxide. The residue at position 148 (Ser148) is a Phosphoserine. The tract at residues 159-169 (HLRKLRKRLLR) is LDL and other lipoprotein receptors binding. 163 to 166 (LRKR) is a binding site for heparin. A lipid-binding and lipoprotein association region spans residues 211-280 (AAQTSQPLRE…GWFEPVVEDM (70 aa)). Residue 226 to 233 (GERLRGRL) coordinates heparin. Residues 268–280 (RLKGWFEPVVEDM) form a specificity for association with VLDL region.

The protein belongs to the apolipoprotein A1/A4/E family. Homotetramer. May interact with ABCA1; functionally associated with ABCA1 in the biogenesis of HDLs. May interact with APP/A4 amyloid-beta peptide; the interaction is extremely stable in vitro but its physiological significance is unclear. May interact with MAPT. May interact with MAP2. In the cerebrospinal fluid, interacts with secreted SORL1. Interacts with PMEL; this allows the loading of PMEL luminal fragment on ILVs to induce fibril nucleation. Post-translationally, APOE exists as multiple glycosylated and sialylated glycoforms within cells and in plasma. The extent of glycosylation and sialylation are tissue and context specific. Glycated in plasma VLDL. In terms of processing, phosphorylated by FAM20C in the extracellular medium.

It localises to the secreted. Its subcellular location is the extracellular space. It is found in the extracellular matrix. The protein resides in the extracellular vesicle. The protein localises to the endosome. It localises to the multivesicular body. Functionally, APOE is an apolipoprotein, a protein associating with lipid particles, that mainly functions in lipoprotein-mediated lipid transport between organs via the plasma and interstitial fluids. APOE is a core component of plasma lipoproteins and is involved in their production, conversion and clearance. Apolipoproteins are amphipathic molecules that interact both with lipids of the lipoprotein particle core and the aqueous environment of the plasma. As such, APOE associates with chylomicrons, chylomicron remnants, very low density lipoproteins (VLDL) and intermediate density lipoproteins (IDL) but shows a preferential binding to high-density lipoproteins (HDL). It also binds a wide range of cellular receptors including the LDL receptor/LDLR, the LDL receptor-related proteins LRP1, LRP2 and LRP8 and the very low-density lipoprotein receptor/VLDLR that mediate the cellular uptake of the APOE-containing lipoprotein particles. Finally, APOE also has a heparin-binding activity and binds heparan-sulfate proteoglycans on the surface of cells, a property that supports the capture and the receptor-mediated uptake of APOE-containing lipoproteins by cells. A main function of APOE is to mediate lipoprotein clearance through the uptake of chylomicrons, VLDLs, and HDLs by hepatocytes. APOE is also involved in the biosynthesis by the liver of VLDLs as well as their uptake by peripheral tissues ensuring the delivery of triglycerides and energy storage in muscle, heart and adipose tissues. By participating in the lipoprotein-mediated distribution of lipids among tissues, APOE plays a critical role in plasma and tissues lipid homeostasis. APOE is also involved in two steps of reverse cholesterol transport, the HDLs-mediated transport of cholesterol from peripheral tissues to the liver, and thereby plays an important role in cholesterol homeostasis. First, it is functionally associated with ABCA1 in the biogenesis of HDLs in tissues. Second, it is enriched in circulating HDLs and mediates their uptake by hepatocytes. APOE also plays an important role in lipid transport in the central nervous system, regulating neuron survival and sprouting. The protein is Apolipoprotein E (APOE) of Hystrix brachyura (Malayan porcupine).